A 1024-amino-acid chain; its full sequence is Beta-galactosidase (1024 aa).

2 residues coordinate substrate: Asn103 and Asp202. Residue Asp202 coordinates Na(+). The Mg(2+) site is built by Glu417, His419, and Glu462. Residues Glu462 and 538–541 (EYAH) each bind substrate. Glu462 functions as the Proton donor in the catalytic mechanism. Glu538 (nucleophile) is an active-site residue. Mg(2+) is bound at residue Asn598. Positions 602 and 605 each coordinate Na(+). Substrate contacts are provided by Asn605 and Trp1000.

This sequence belongs to the glycosyl hydrolase 2 family. As to quaternary structure, homotetramer. It depends on Mg(2+) as a cofactor. Requires Na(+) as cofactor.

It carries out the reaction Hydrolysis of terminal non-reducing beta-D-galactose residues in beta-D-galactosides.. In Shigella sonnei (strain Ss046), this protein is Beta-galactosidase.